We begin with the raw amino-acid sequence, 125 residues long: Phosphoribosyl-AMP cyclohydrolase (125 aa).

Aspartate 74 is a Mg(2+) binding site. Cysteine 75 lines the Zn(2+) pocket. Mg(2+)-binding residues include aspartate 76 and aspartate 78. Zn(2+) contacts are provided by cysteine 92 and cysteine 99.

Belongs to the PRA-CH family. In terms of assembly, homodimer. The cofactor is Mg(2+). Zn(2+) is required as a cofactor.

The protein localises to the cytoplasm. It catalyses the reaction 1-(5-phospho-beta-D-ribosyl)-5'-AMP + H2O = 1-(5-phospho-beta-D-ribosyl)-5-[(5-phospho-beta-D-ribosylamino)methylideneamino]imidazole-4-carboxamide. Its pathway is amino-acid biosynthesis; L-histidine biosynthesis; L-histidine from 5-phospho-alpha-D-ribose 1-diphosphate: step 3/9. Catalyzes the hydrolysis of the adenine ring of phosphoribosyl-AMP. This chain is Phosphoribosyl-AMP cyclohydrolase, found in Trichlorobacter lovleyi (strain ATCC BAA-1151 / DSM 17278 / SZ) (Geobacter lovleyi).